The following is a 962-amino-acid chain: Atromentin synthetase nps3 (962 aa).

Positions F55–V469 are adenylation (A) domain. The 79-residue stretch at V601–V679 folds into the Carrier domain. Residues T606–D676 are thiolation and peptide carrier (T) domain. Residue S638 is modified to O-(pantetheine 4'-phosphoryl)serine. The thioesterase (TE) domain stretch occupies residues P702–I805.

The protein belongs to the ATP-dependent AMP-binding enzyme family.

It functions in the pathway secondary metabolite biosynthesis. Functionally, an L-tyrosine:2-oxoglutarate aminotransferase (probably amt1) and atromentin synthetase nps3 catalyze consecutive steps to turn over L-tyrosine into atromentin, which represents the generic precursor molecule for the entire terphenylquinone and pulvinic acid family of pigments, which are widely distributed secondary metabolites in homobasidiomycetes. The first step catalyzed by the aminotransferase converts L-tyrosine in to 4-hydroxyphenylpyruvate (4-HPP). Adenylation of two 4-HPP monomers by the nps3 adenylation (A) domain, covalent tethering of the monomers as a thioester and oxoester onto the nps3 thiolation (T) and thioesterase (TE) domains, respectively, and symmetric C-C-bond formation between two monomers catalyzed by the nps3 TE domain leads to atromentin. Follow-up products of atromentin in S.lacrymans include atromentic acid, xerocomic acid, isoxerocomic acid and variegatic acid. The protein is Atromentin synthetase nps3 (nps3) of Serpula lacrymans var. lacrymans (strain S7.9) (Dry rot fungus).